The chain runs to 81 residues: uncharacterized protein (81 aa).

K5 is covalently cross-linked (Glycyl lysine isopeptide (Lys-Gly) (interchain with G-Cter in host protein DncV)).

Post-translationally, cross-linked via an isopeptide bond to E.coli host protein DncV during infection.

This is an uncharacterized protein from Enterobacteria phage T4 (Bacteriophage T4).